The following is a 159-amino-acid chain: MKIKLVVVGKLKEKYLKDGIAEYVKRMGTMLPLEIIELADEKIPDNASEKEAEALKKREGEKILSRIQAGDQLAILAIQGKLMSSEEVADFVKKAEVYGTGNLVFVIGGSLGLSKEVYQRSDLQISFGRMTLPHQLMRLVLVEQIYRAQMINRGSAYHK.

S-adenosyl-L-methionine is bound by residues Ile-75, Gly-108, and 127–132; that span reads FGRMTL.

It belongs to the RNA methyltransferase RlmH family. In terms of assembly, homodimer.

It localises to the cytoplasm. The catalysed reaction is pseudouridine(1915) in 23S rRNA + S-adenosyl-L-methionine = N(3)-methylpseudouridine(1915) in 23S rRNA + S-adenosyl-L-homocysteine + H(+). Specifically methylates the pseudouridine at position 1915 (m3Psi1915) in 23S rRNA. This is Ribosomal RNA large subunit methyltransferase H from Lactococcus lactis subsp. lactis (strain IL1403) (Streptococcus lactis).